The following is a 249-amino-acid chain: Cell division protein FtsQ (249 aa).

The Cytoplasmic portion of the chain corresponds to 1–6; sequence MKFILF. A helical membrane pass occupies residues 7 to 23; the sequence is ALLVSAGSWYGWKQLHS. The Periplasmic segment spans residues 24–249; the sequence is QDAVSKPIRY…YKNVMKERRI (226 aa). Residues 29–98 enclose the POTRA domain; that stretch reads KPIRYVKIEG…DAVHIKITEQ (70 aa).

Belongs to the FtsQ/DivIB family. FtsQ subfamily. In terms of assembly, part of a complex composed of FtsB, FtsL and FtsQ.

It localises to the cell inner membrane. In terms of biological role, essential cell division protein. May link together the upstream cell division proteins, which are predominantly cytoplasmic, with the downstream cell division proteins, which are predominantly periplasmic. May control correct divisome assembly. This is Cell division protein FtsQ from Methylomonas methanica (strain DSM 25384 / MC09).